Reading from the N-terminus, the 626-residue chain is Chaperone protein HtpG (626 aa).

Residues 1 to 341 (METKQFKAES…SEDLSLNISR (341 aa)) form an a; substrate-binding region. The interval 342-552 (EMLQHDRQLK…EGEISIEMEK (211 aa)) is b. The tract at residues 553-626 (ILSAMPNNEN…FSNSICKLMI (74 aa)) is c.

This sequence belongs to the heat shock protein 90 family. Homodimer.

It localises to the cytoplasm. In terms of biological role, molecular chaperone. Has ATPase activity. This is Chaperone protein HtpG from Alkaliphilus oremlandii (strain OhILAs) (Clostridium oremlandii (strain OhILAs)).